A 695-amino-acid polypeptide reads, in one-letter code: Centrosomal protein kizuna (695 aa).

Residues 1 to 12 (MPRGRGGGGGGL) are compositionally biased toward gly residues. The segment at 1 to 24 (MPRGRGGGGGGLRQASATSAPLAS) is disordered. Residues 15–24 (ASATSAPLAS) are compositionally biased toward low complexity. Coiled-coil stretches lie at residues 29-57 (ERVG…EYNK) and 102-132 (VEHL…LSKD). Disordered regions lie at residues 261 to 313 (EIGS…SDRE), 351 to 391 (HSAW…SDLT), 444 to 465 (QSFP…EKVP), and 633 to 695 (SEAS…FYDT). Polar residues-rich tracts occupy residues 263–274 (GSSTQHSKSNLS) and 282–297 (LHSS…NSIT). 2 stretches are compositionally biased toward basic and acidic residues: residues 299 to 313 (LKCD…SDRE) and 360 to 377 (DLDH…KHEE). A compositionally biased stretch (low complexity) spans 382–391 (GSSCSSSDLT). Phosphothreonine; by PLK1 is present on threonine 391. Basic and acidic residues predominate over residues 448-465 (DSKREPSPDSPRQPEKVP). Over residues 633–645 (SEASFSSSEGSPL) the composition is skewed to low complexity. A phosphoserine mark is found at serine 667, serine 670, and serine 672. Residues 676–686 (AALRPRDHDMP) show a composition bias toward basic and acidic residues.

It belongs to the kizuna family. Interacts with AKAP9, CEP72, ODF2, PCNT and TUBGCP2. Post-translationally, phosphorylation at Thr-391 by PLK1 is not needed for centrosomal localization or pericentriolar material expansion but is indispensable for spindle-pole stabilization.

It localises to the cytoplasm. The protein localises to the cytoskeleton. Its subcellular location is the microtubule organizing center. It is found in the centrosome. The protein resides in the cilium basal body. In terms of biological role, centrosomal protein required for establishing a robust mitotic centrosome architecture that can endure the forces that converge on the centrosomes during spindle formation. Required for stabilizing the expanded pericentriolar material around the centriole. The protein is Centrosomal protein kizuna (Kiz) of Mus musculus (Mouse).